We begin with the raw amino-acid sequence, 416 residues long: Adrenocortical dysplasia protein (416 aa).

Positions 11–13 match the PWI motif; the sequence is PWI. S25 is subject to Phosphoserine. The interval 156-245 is interaction with POT1; the sequence is ESASSSAGLT…SSTGSSQKAR (90 aa). Residues 234 to 251 show a composition bias toward polar residues; sequence ILSSTGSSQKARGTSASP. Residues 234–306 are disordered; that stretch reads ILSSTGSSQK…TSPPCNSTPS (73 aa). A compositionally biased stretch (low complexity) spans 259–272; that stretch reads SGASVSLLSALATS. Over residues 273-292 the composition is skewed to polar residues; sequence DPGQMDSSQSPPAVGSTSPR. 2 positions are modified to phosphoserine: S313 and S317. Residue K345 forms a Glycyl lysine isopeptide (Lys-Gly) (interchain with G-Cter in SUMO2) linkage.

Component of the shelterin complex (telosome) composed of TERF1, TERF2, TINF2, TERF2IP ACD and POT1. Forms heterodimers with POT1. Identified in a complex with POT1 and single-stranded telomeric DNA. Interacts with STN1 and TINF2. As to expression, ubiquitous.

It is found in the nucleus. Its subcellular location is the chromosome. The protein localises to the telomere. Functionally, component of the shelterin complex (telosome) that is involved in the regulation of telomere length and protection. Shelterin associates with arrays of double-stranded TTAGGG repeats added by telomerase and protects chromosome ends. Without its protective activity, telomeres are no longer hidden from the DNA damage surveillance and chromosome ends are inappropriately processed by DNA repair pathways. Promotes binding of POT1 to single-stranded telomeric DNA. Modulates the inhibitory effects of POT1 on telomere elongation. The ACD-POT1 heterodimer enhances telomere elongation by recruiting telomerase to telomeres and increasing its processivity. May play a role in organogenesis. This Mus musculus (Mouse) protein is Adrenocortical dysplasia protein.